Here is a 644-residue protein sequence, read N- to C-terminus: MSHLTLQLHVVIALYVLFRWCHGGITSINCSGDMWVEPGEIFQMGMNVSIYCQEALKHCRPRNLYFYKNGFKEEFDITRINRTTARIWYKGFSEPHAYMHCTAECPGHFQETLICGKDISSGHPPDAPSNLTCVIYEYSGNMTCTWNTGKPTYIDTKYIVHVKSLETEEEQQYLASSYVKISTDSLQGSRKYLVWVQAVNSLGMENSQQLHVHLDDIVIPSASIISRAETTNDTVPKTIVYWKSKTMIEKVFCEMRYKTTTNQTWSVKEFDANFTYVQQSEFYLEPDSKYVFQVRCQETGKRNWQPWSSPFVHQTSQETGKRNWQPWSSPFVHQTSQTVSQVTAKSSHEPQKMEMLSATIFRGHPASGNHQDIGLLSGMVFLAIMLPIFSLIGIFNRSLRIGIKRKVLLMIPKWLYEDIPNMENSNVAKLLQEKSVFENDNASEQALYVDPVLTEISEISPLEHKPTDYKEERLTGLLETRDCPLGMLSTSSSVVYIPDLNTGYKPQVSNVPPGGNLFINRDERDPTSLETTDDHFARLKTYPNFQFSASSMALLNKTLILDELCLVLNQGEFNSLDIKNSRQEETSIVLQSDSPSETIPAQTLLSDEFVSCLAIGNEDLPSINSYFPQNVLESHFSRISLFQK.

The first 23 residues, 1–23 (MSHLTLQLHVVIALYVLFRWCHG), serve as a signal peptide directing secretion. Residues 24–374 (GITSINCSGD…PASGNHQDIG (351 aa)) are Extracellular-facing. N-linked (GlcNAc...) asparagine glycosylation is found at Asn-47, Asn-130, and Asn-232. Fibronectin type-III domains are found at residues 127–217 (APSN…LDDI) and 219–318 (IPSA…TSQE). A helical membrane pass occupies residues 375 to 395 (LLSGMVFLAIMLPIFSLIGIF). Over 396 to 644 (NRSLRIGIKR…HFSRISLFQK (249 aa)) the chain is Cytoplasmic.

The protein belongs to the type I cytokine receptor family. Type 2 subfamily. In terms of assembly, heterodimer with IL12RB1. In presence of IL23, the heterodimer forms the IL23 receptor. Interacts with JAK2 and in presence of IL23 with STAT3. Post-translationally, phosphorylated in response to IL23. Expressed by Th1, Th2 and dendritic cells.

The protein resides in the cell membrane. Associates with IL12RB1 to form the interleukin-23 receptor. Binds IL23 and mediates T-cells, NK cells and possibly certain macrophage/myeloid cells stimulation probably through activation of the Jak-Stat signaling cascade. IL23 functions in innate and adaptive immunity and may participate in acute response to infection in peripheral tissues. IL23 may be responsible for autoimmune inflammatory diseases and be important for tumorigenesis. The chain is Interleukin-23 receptor (Il23r) from Mus musculus (Mouse).